A 617-amino-acid chain; its full sequence is Erythritol-mannosyl-transferase 1 (617 aa).

2 disordered regions span residues 365–396 (RNPGSPGFTSPLNSPTAVATPKWDEKRPIDSR) and 567–617 (RQRK…VTNP). Residues 371 to 381 (GFTSPLNSPTA) show a composition bias toward polar residues. The span at 386 to 396 (KWDEKRPIDSR) shows a compositional bias: basic and acidic residues. Residues 578 to 603 (TAKTSLSVDTTEVATPTFTDTETSLS) show a composition bias toward polar residues.

This sequence belongs to the UDP-glycosyltransferase family.

The protein operates within secondary metabolite biosynthesis. Glycosyltransferase; part of the gene cluster that mediates the biosynthesis of mannosylerythritol lipids (MELs), surface-active substances that enhance the availability of water-insoluble substrates. Depending on the number of acetyl groups, mannosylerythritol lipids can be differentiated into MEL A (fully acetylated), MEL B and MEL C (monoacetylated at R-6 and R-4, respectively), and the fully deacetylated MEL D. The first step in the pathway is the generation of mannosylerythritol by the glycosyltransferase EMT1 which catalyzes the transfer of GDP-mannose to the C-4 atom of meso-erythritol. This reaction has to be stereospecific, since only mannosyl-D-erythritol is generated. The produced disaccharide is subsequently acylated with fatty acids of various lengths by the acyltransferases MAC1 and MAC2 at positions C-2 and C-3, repectively. The existence of MEL derivatives which carry an acetyl group at C-2 implies that at least MAC1 also accepts acetyl-CoA as a donor. The final step of MEL biosynthesis is the acetylation of the fully acylated mannosylerythritol lipids catalyzed by the acetyl-CoA-dependent acetyltransferase MAT1. MAT1 displays a relaxed regioselectivity and is able to transfer acetylgroups to both positions C-4 and C-6 of the mannosyl moiety. This Pseudozyma antarctica (strain T-34) (Yeast) protein is Erythritol-mannosyl-transferase 1.